Here is a 202-residue protein sequence, read N- to C-terminus: CASP-like protein 2B1 (202 aa).

The Cytoplasmic segment spans residues 1–29 (MSYLGVGVSPGNVPVYHGTNSKVIDRRVR). A helical transmembrane segment spans residues 30 to 50 (LAELVLRCVICCLGVLAAVLV). Residues 51-72 (GTDTQVKEIFSIQKKARFTDMK) lie on the Extracellular side of the membrane. The helical transmembrane segment at 73 to 93 (ALVFLVAANGIAAAYSFVQGV) threads the bilayer. Residues 94–109 (RCVVGMVKGSVLFSKP) are Cytoplasmic-facing. A helical transmembrane segment spans residues 110–132 (LAWVIFSGDQMMAYLTMSAVAAA). Residues 133–164 (AQSSVFAKLGQPDLQWMKICTMYGKFCNQVGE) lie on the Extracellular side of the membrane. Residues 165 to 185 (GIASALLVSVSMVVLSCISAF) traverse the membrane as a helical segment. Topologically, residues 186-202 (SLFRLYGGNKGKDGARW) are cytoplasmic.

It belongs to the Casparian strip membrane proteins (CASP) family. Homodimer and heterodimers.

The protein localises to the cell membrane. The polypeptide is CASP-like protein 2B1 (Populus trichocarpa (Western balsam poplar)).